The chain runs to 151 residues: Chromophore lyase CpcS/CpeS homolog (151 aa).

It belongs to the CpcS/CpeS biliprotein lyase family.

The protein localises to the plastid. It localises to the chloroplast. Might function to covalently attach a chromophore to Cys residue(s) of phycobiliproteins. This is Chromophore lyase CpcS/CpeS homolog from Gracilaria tenuistipitata var. liui (Red alga).